The following is a 171-amino-acid chain: Transcription factor E (171 aa).

One can recognise an HTH TFE/IIEalpha-type domain in the interval 5–91; sequence DNKAVRGYIQ…LWKLDLDNSV (87 aa).

Belongs to the TFE family. In terms of assembly, monomer. Interaction with RNA polymerase subunits RpoF and RpoE is necessary for Tfe stimulatory transcription activity. Able to interact with Tbp and RNA polymerase in the absence of DNA promoter. Interacts both with the preinitiation and elongation complexes.

Its function is as follows. Transcription factor that plays a role in the activation of archaeal genes transcribed by RNA polymerase. Facilitates transcription initiation by enhancing TATA-box recognition by TATA-box-binding protein (Tbp), and transcription factor B (Tfb) and RNA polymerase recruitment. Not absolutely required for transcription in vitro, but particularly important in cases where Tbp or Tfb function is not optimal. It dynamically alters the nucleic acid-binding properties of RNA polymerases by stabilizing the initiation complex and destabilizing elongation complexes. Seems to translocate with the RNA polymerase following initiation and acts by binding to the non template strand of the transcription bubble in elongation complexes. This Methanocella arvoryzae (strain DSM 22066 / NBRC 105507 / MRE50) protein is Transcription factor E.